The following is a 131-amino-acid chain: Phosphomevalonate dehydratase small subunit (131 aa).

Serine 62 serves as the catalytic Proton acceptor.

This sequence belongs to the AcnX type II small subunit family. Heterodimer composed of a large subunit (PMDh-L) and a small subunit (PMDh-S).

It catalyses the reaction (R)-5-phosphomevalonate = (2E)-3-methyl-5-phosphooxypent-2-enoate + H2O. It participates in isoprenoid biosynthesis; isopentenyl diphosphate biosynthesis via mevalonate pathway. Component of a hydro-lyase that catalyzes the dehydration of mevalonate 5-phosphate (MVA5P) to form trans-anhydromevalonate 5-phosphate (tAHMP). Involved in the archaeal mevalonate (MVA) pathway, which provides fundamental precursors for isoprenoid biosynthesis, such as isopentenyl diphosphate (IPP) and dimethylallyl diphosphate (DMAPP). This Thermococcus gammatolerans (strain DSM 15229 / JCM 11827 / EJ3) protein is Phosphomevalonate dehydratase small subunit.